The primary structure comprises 119 residues: Ribonuclease P protein component (119 aa).

The protein belongs to the RnpA family. In terms of assembly, consists of a catalytic RNA component (M1 or rnpB) and a protein subunit.

It carries out the reaction Endonucleolytic cleavage of RNA, removing 5'-extranucleotides from tRNA precursor.. In terms of biological role, RNaseP catalyzes the removal of the 5'-leader sequence from pre-tRNA to produce the mature 5'-terminus. It can also cleave other RNA substrates such as 4.5S RNA. The protein component plays an auxiliary but essential role in vivo by binding to the 5'-leader sequence and broadening the substrate specificity of the ribozyme. The polypeptide is Ribonuclease P protein component (Bacillus cereus (strain ZK / E33L)).